Reading from the N-terminus, the 378-residue chain is 3-dehydroquinate synthase (378 aa).

Residues 115 to 119 (GVVGD), 139 to 140 (TS), Lys-152, and Lys-161 each bind NAD(+). Zn(2+) contacts are provided by Glu-194, His-256, and His-275.

This sequence belongs to the sugar phosphate cyclases superfamily. Dehydroquinate synthase family. Co(2+) serves as cofactor. Requires Zn(2+) as cofactor. The cofactor is NAD(+).

The protein resides in the cytoplasm. It catalyses the reaction 7-phospho-2-dehydro-3-deoxy-D-arabino-heptonate = 3-dehydroquinate + phosphate. It participates in metabolic intermediate biosynthesis; chorismate biosynthesis; chorismate from D-erythrose 4-phosphate and phosphoenolpyruvate: step 2/7. Functionally, catalyzes the conversion of 3-deoxy-D-arabino-heptulosonate 7-phosphate (DAHP) to dehydroquinate (DHQ). The polypeptide is 3-dehydroquinate synthase (Brucella suis (strain ATCC 23445 / NCTC 10510)).